Consider the following 261-residue polypeptide: tRNA pseudouridine synthase A (261 aa).

The active-site Nucleophile is aspartate 51. Tyrosine 109 provides a ligand contact to substrate.

It belongs to the tRNA pseudouridine synthase TruA family. Homodimer.

It catalyses the reaction uridine(38/39/40) in tRNA = pseudouridine(38/39/40) in tRNA. In terms of biological role, formation of pseudouridine at positions 38, 39 and 40 in the anticodon stem and loop of transfer RNAs. The polypeptide is tRNA pseudouridine synthase A (Shewanella piezotolerans (strain WP3 / JCM 13877)).